Reading from the N-terminus, the 391-residue chain is Digeranylgeranylglycerophospholipid reductase (391 aa).

FAD-binding residues include G19, D38, C49, A50, A52, R99, V123, D279, G291, and I292. V369 is an a 2,3-bis-O-(geranylgeranyl)-sn-glycerol 1-phospholipid binding site.

This sequence belongs to the geranylgeranyl reductase family. DGGGPL reductase subfamily. FAD is required as a cofactor.

The enzyme catalyses a 2,3-bis-O-phytanyl-sn-glycerol 1-phospholipid + 8 A = a 2,3-bis-O-(geranylgeranyl)-sn-glycerol 1-phospholipid + 8 AH2. It catalyses the reaction 2,3-bis-O-(phytanyl)-sn-glycerol 1-phosphate + 8 A = 2,3-bis-O-(geranylgeranyl)-sn-glycerol 1-phosphate + 8 AH2. It carries out the reaction CDP-2,3-bis-O-(geranylgeranyl)-sn-glycerol + 8 AH2 = CDP-2,3-bis-O-(phytanyl)-sn-glycerol + 8 A. The catalysed reaction is archaetidylserine + 8 AH2 = 2,3-bis-O-phytanyl-sn-glycero-3-phospho-L-serine + 8 A. It functions in the pathway membrane lipid metabolism; glycerophospholipid metabolism. In terms of biological role, is involved in the reduction of 2,3-digeranylgeranylglycerophospholipids (unsaturated archaeols) into 2,3-diphytanylglycerophospholipids (saturated archaeols) in the biosynthesis of archaeal membrane lipids. Catalyzes the formation of archaetidic acid (2,3-di-O-phytanyl-sn-glyceryl phosphate) from 2,3-di-O-geranylgeranylglyceryl phosphate (DGGGP) via the hydrogenation of each double bond of the isoprenoid chains. Is also probably able to reduce double bonds of geranyl groups in CDP-2,3-bis-O-(geranylgeranyl)-sn-glycerol and archaetidylserine, thus acting at various stages in the biosynthesis of archaeal membrane lipids. The polypeptide is Digeranylgeranylglycerophospholipid reductase (Methanococcus aeolicus (strain ATCC BAA-1280 / DSM 17508 / OCM 812 / Nankai-3)).